Here is a 504-residue protein sequence, read N- to C-terminus: ATP synthase subunit alpha (504 aa).

An ATP-binding site is contributed by 170–177 (GDRQTGKT).

This sequence belongs to the ATPase alpha/beta chains family. F-type ATPases have 2 components, CF(1) - the catalytic core - and CF(0) - the membrane proton channel. CF(1) has five subunits: alpha(3), beta(3), gamma(1), delta(1), epsilon(1). CF(0) has four main subunits: a(1), b(1), b'(1) and c(9-12).

It localises to the cellular thylakoid membrane. It catalyses the reaction ATP + H2O + 4 H(+)(in) = ADP + phosphate + 5 H(+)(out). Produces ATP from ADP in the presence of a proton gradient across the membrane. The alpha chain is a regulatory subunit. This is ATP synthase subunit alpha from Prochlorococcus marinus (strain NATL1A).